The chain runs to 575 residues: CCR4-NOT transcription complex subunit 4 (575 aa).

An RING-type; degenerate zinc finger spans residues 14–57 (CPLCMEPLEIDDINFFPCTCGYQICRFCWHRIRTDENGLCPACR). Residues 68-104 (KPLSQEELQRIKNEKKQKQNERKQKISENRKHLASVR) adopt a coiled-coil conformation. Serine 71 carries the post-translational modification Phosphoserine. One can recognise an RRM domain in the interval 109 to 189 (NLVFVVGLSQ…VVDGRTLKAS (81 aa)). The segment at 190–217 (LGTTKYCSYFLKNMQCPKPDCMYLHELG) adopts a C3H1-type zinc-finger fold. 2 disordered regions span residues 256-372 (TGSV…EPQS) and 424-458 (SVQD…HPAA). Residues 281–299 (DSLSIGNGDNSQQISNSDT) are compositionally biased toward polar residues. Position 301 is a phosphoserine (serine 301). Residues 307–322 (SKSNPVIPISSSNHSA) show a composition bias toward polar residues. Residue serine 324 is modified to Phosphoserine. Over residues 345–356 (NPIPSGLPPFPS) the composition is skewed to pro residues. Residues 428–441 (QPSLSPTSLQNSSS) show a composition bias toward low complexity. Position 432 is a phosphoserine (serine 432). Arginine 475 and arginine 483 each carry asymmetric dimethylarginine. Serine 490 bears the Phosphoserine mark. At arginine 497 the chain carries Asymmetric dimethylarginine. The segment at 553-575 (PLSTSSHSLQQGQQPTSLHTTVA) is disordered.

In terms of assembly, interacts with CNOT1 via its C-terminus but does not stably associate with the CCR4-NOT complex. Interacts (via RING domain) with UBE2D2. Interacts with ABCE1, PINK1 and PELO. In terms of processing, autoubiquitinated.

It localises to the cytoplasm. Its subcellular location is the nucleus. It carries out the reaction S-ubiquitinyl-[E2 ubiquitin-conjugating enzyme]-L-cysteine + [acceptor protein]-L-lysine = [E2 ubiquitin-conjugating enzyme]-L-cysteine + N(6)-ubiquitinyl-[acceptor protein]-L-lysine.. It participates in protein modification; protein ubiquitination. Functionally, has E3 ubiquitin ligase activity, promoting ubiquitination and degradation of target proteins. Involved in activation of the JAK/STAT pathway. Catalyzes ubiquitination of methylated RBM15. Plays a role in quality control of translation of mitochondrial outer membrane-localized mRNA. As part of the PINK1-regulated signaling, upon mitochondria damage, ubiquitinates ABCE1 and thereby recruits autophagy receptors to the mitochondrial outer membrane to initiate mitophagy. The sequence is that of CCR4-NOT transcription complex subunit 4 (CNOT4) from Homo sapiens (Human).